A 343-amino-acid chain; its full sequence is Probable 4-hydroxy-tetrahydrodipicolinate reductase 1, chloroplastic (343 aa).

Residues 1 to 14 (MLASTFATHPAAAA) constitute a chloroplast transit peptide. Residues 167–169 (GTT) and 190–193 (SPQM) each bind NAD(+). The active-site Proton donor/acceptor is the histidine 226. The Proton donor role is filled by lysine 230. 235–236 (GT) provides a ligand contact to (S)-2,3,4,5-tetrahydrodipicolinate.

The protein belongs to the DapB family.

The protein localises to the plastid. It is found in the chloroplast. The catalysed reaction is (S)-2,3,4,5-tetrahydrodipicolinate + NAD(+) + H2O = (2S,4S)-4-hydroxy-2,3,4,5-tetrahydrodipicolinate + NADH + H(+). The enzyme catalyses (S)-2,3,4,5-tetrahydrodipicolinate + NADP(+) + H2O = (2S,4S)-4-hydroxy-2,3,4,5-tetrahydrodipicolinate + NADPH + H(+). Its pathway is amino-acid biosynthesis; L-lysine biosynthesis via DAP pathway; (S)-tetrahydrodipicolinate from L-aspartate: step 4/4. Functionally, catalyzes the conversion of 4-hydroxy-tetrahydrodipicolinate (HTPA) to tetrahydrodipicolinate. The protein is Probable 4-hydroxy-tetrahydrodipicolinate reductase 1, chloroplastic (DAPB1) of Oryza sativa subsp. japonica (Rice).